A 509-amino-acid polypeptide reads, in one-letter code: 2-isopropylmalate synthase (509 aa).

The 263-residue stretch at 5-267 (IQIFDTTLRD…QTALNLEETK (263 aa)) folds into the Pyruvate carboxyltransferase domain. The Mn(2+) site is built by Asp14, His202, His204, and Asn238. A regulatory domain region spans residues 391-509 (KLETLQLQYV…AAENVEKVGN (119 aa)).

It belongs to the alpha-IPM synthase/homocitrate synthase family. LeuA type 1 subfamily. Homodimer. Mn(2+) is required as a cofactor.

The protein resides in the cytoplasm. It carries out the reaction 3-methyl-2-oxobutanoate + acetyl-CoA + H2O = (2S)-2-isopropylmalate + CoA + H(+). It functions in the pathway amino-acid biosynthesis; L-leucine biosynthesis; L-leucine from 3-methyl-2-oxobutanoate: step 1/4. Catalyzes the condensation of the acetyl group of acetyl-CoA with 3-methyl-2-oxobutanoate (2-ketoisovalerate) to form 3-carboxy-3-hydroxy-4-methylpentanoate (2-isopropylmalate). In Staphylococcus aureus (strain USA300), this protein is 2-isopropylmalate synthase.